Consider the following 761-residue polypeptide: Neurotrypsin (761 aa).

Residues Met-1–Ala-21 form the signal peptide. The disordered stretch occupies residues His-26–Gly-88. Residues Thr-54 to Ala-63 are compositionally biased toward pro residues. The Kringle domain occupies Cys-85–Cys-157. Disulfide bonds link Cys-85–Cys-157, Cys-101–Cys-141, Cys-130–Cys-155, Cys-191–Cys-255, Cys-204–Cys-265, Cys-235–Cys-245, Cys-298–Cys-361, Cys-311–Cys-371, Cys-341–Cys-351, Cys-411–Cys-475, Cys-424–Cys-485, Cys-455–Cys-465, Cys-505–Cys-636, Cys-547–Cys-563, Cys-651–Cys-717, Cys-680–Cys-694, and Cys-707–Cys-736. Asn-93 is a glycosylation site (N-linked (GlcNAc...) asparagine). SRCR domains are found at residues Ile-166–Pro-267, Ile-273–Pro-373, and Ile-386–Tyr-487. The tract at residues Cys-505–Arg-516 is zymogen activation region. Positions Ile-517–Ser-760 constitute a Peptidase S1 domain. N-linked (GlcNAc...) asparagine glycosylation is present at Asn-521. His-562 functions as the Charge relay system in the catalytic mechanism. N-linked (GlcNAc...) asparagine glycosylation is present at Asn-569. The active-site Charge relay system is Asp-612. Residue Ser-711 is the Charge relay system of the active site.

It belongs to the peptidase S1 family.

It localises to the secreted. Functionally, plays a role in neuronal plasticity and the proteolytic action may subserve structural reorganizations associated with learning and memory operations. The sequence is that of Neurotrypsin (Prss12) from Rattus norvegicus (Rat).